The primary structure comprises 938 residues: Isoleucine--tRNA ligase (938 aa).

The 'HIGH' region motif lies at Pro-58 to His-68. Residue Lys-183 is modified to N6-acetyllysine. Residue Glu-561 coordinates L-isoleucyl-5'-AMP. A 'KMSKS' region motif is present at residues Lys-602–Ser-606. Residue Lys-605 coordinates ATP. 4 residues coordinate Zn(2+): Cys-901, Cys-904, Cys-921, and Cys-924.

Belongs to the class-I aminoacyl-tRNA synthetase family. IleS type 1 subfamily. Monomer. Zn(2+) is required as a cofactor.

The protein resides in the cytoplasm. The enzyme catalyses tRNA(Ile) + L-isoleucine + ATP = L-isoleucyl-tRNA(Ile) + AMP + diphosphate. Its function is as follows. Catalyzes the attachment of isoleucine to tRNA(Ile). As IleRS can inadvertently accommodate and process structurally similar amino acids such as valine, to avoid such errors it has two additional distinct tRNA(Ile)-dependent editing activities. One activity is designated as 'pretransfer' editing and involves the hydrolysis of activated Val-AMP. The other activity is designated 'posttransfer' editing and involves deacylation of mischarged Val-tRNA(Ile). The sequence is that of Isoleucine--tRNA ligase from Shigella dysenteriae serotype 1 (strain Sd197).